The sequence spans 559 residues: Tissue-type plasminogen activator (559 aa).

The first 17 residues, 1 to 17, serve as a signal peptide directing secretion; the sequence is MKGELLCVLLLCGVAFT. Positions 18 to 29 are excised as a propeptide; it reads LPDQGIHRRFRR. Residues 30–32 constitute a propeptide, removed by plasmin; it reads GAR. The Fibronectin type-I domain maps to 36 to 78; sequence ATCRDEQTQTTYQQHQSWLRPMLRGNRVEYCRCNSGLAQCHSV. 17 disulfide bridges follow: C38–C68, C66–C75, C83–C94, C88–C105, C107–C116, C124–C205, C145–C187, C176–C200, C213–C294, C234–C276, C265–C289, C297–C428, C340–C356, C348–C417, C442–C516, C474–C490, and C506–C534. Residues 39 to 49 are important for binding to annexin A2; sequence RDEQTQTTYQQ. The EGF-like domain occupies 79 to 117; it reads PVRSCSEPRCFNGGTCQQALYFSDFVCQCPDGFVGKRCD. Kringle domains lie at 124 to 205 and 213 to 294; these read CFEG…TPAC and CYVG…MSPC. N-linked (GlcNAc...) asparagine glycosylation occurs at N149. In terms of domain architecture, Peptidase S1 spans 309–558; it reads IKGGLFTDIT…YLNWIQDNMK (250 aa). Active-site charge relay system residues include H355 and D404. Residue N481 is glycosylated (N-linked (GlcNAc...) asparagine). S510 (charge relay system) is an active-site residue.

It belongs to the peptidase S1 family. In terms of assembly, heterodimer of chain A and chain B held by a disulfide bond. Binds to fibrin with high affinity. This interaction leads to an increase in the catalytic efficiency of the enzyme due to an increase in affinity for plasminogen. Similarly, binding to heparin increases the activation of plasminogen. Binds to annexin A2, cytokeratin-8, fibronectin and laminin. Binds to mannose receptor and the low-density lipoprotein receptor-related protein (LRP1); these proteins are involved in TPA clearance. Binds LRP1B; binding is followed by internalization and degradation. Forms heterodimer with SERPINA5. Interacts with SERPINE1. In complex with SERPINE1, interacts with SORL1. In terms of processing, the single chain, almost fully active enzyme, can be further processed into a two-chain fully active form by a cleavage after Arg-308 catalyzed by plasmin, tissue kallikrein or factor Xa.

Its subcellular location is the secreted. The protein resides in the extracellular space. The enzyme catalyses Specific cleavage of Arg-|-Val bond in plasminogen to form plasmin.. With respect to regulation, inhibited by SERPINA5. Inhibited by SERPINE1. In terms of biological role, converts the abundant, but inactive, zymogen plasminogen to plasmin by hydrolyzing a single Arg-Val bond in plasminogen. By controlling plasmin-mediated proteolysis, it plays an important role in tissue remodeling and degradation, in cell migration and many other physiopathological events. During oocyte activation, plays a role in cortical granule reaction in the zona reaction, which contributes to the block to polyspermy. The sequence is that of Tissue-type plasminogen activator (Plat) from Rattus norvegicus (Rat).